Reading from the N-terminus, the 1124-residue chain is Phytochrome A (1124 aa).

Over residues 1 to 19 the composition is skewed to low complexity; sequence MSTTRPSQSSNNSGRSRNS. Residues 1 to 21 form a disordered region; the sequence is MSTTRPSQSSNNSGRSRNSAR. Positions 218 to 401 constitute a GAF domain; it reads SMERLCDTMV…VFAIHVNKEI (184 aa). Cysteine 323 lines the phytochromobilin pocket. PAS domains lie at 617 to 687 and 750 to 821; these read VTSE…LQGE and DYKA…VNFG. The region spanning 901-1120 is the Histidine kinase domain; sequence YMKRQIRNPL…ILSVELAAAH (220 aa).

This sequence belongs to the phytochrome family. As to quaternary structure, homodimer. Post-translationally, contains one covalently linked phytochromobilin chromophore.

Its function is as follows. Regulatory photoreceptor which exists in two forms that are reversibly interconvertible by light: the Pr form that absorbs maximally in the red region of the spectrum and the Pfr form that absorbs maximally in the far-red region. Photoconversion of Pr to Pfr induces an array of morphogenic responses, whereas reconversion of Pfr to Pr cancels the induction of those responses. Pfr controls the expression of a number of nuclear genes including those encoding the small subunit of ribulose-bisphosphate carboxylase, chlorophyll A/B binding protein, protochlorophyllide reductase, rRNA, etc. It also controls the expression of its own gene(s) in a negative feedback fashion. This chain is Phytochrome A (PHYA), found in Pisum sativum (Garden pea).